The chain runs to 154 residues: 17.8 kDa class I heat shock protein (154 aa).

Residues E40–G154 enclose the sHSP domain.

The protein belongs to the small heat shock protein (HSP20) family. In terms of assembly, forms oligomeric structures.

The protein localises to the cytoplasm. The sequence is that of 17.8 kDa class I heat shock protein from Solanum lycopersicum (Tomato).